An 88-amino-acid polypeptide reads, in one-letter code: Small ribosomal subunit protein bS16c (88 aa).

This sequence belongs to the bacterial ribosomal protein bS16 family.

It is found in the plastid. The protein localises to the chloroplast. This Atropa belladonna (Belladonna) protein is Small ribosomal subunit protein bS16c.